Here is a 293-residue protein sequence, read N- to C-terminus: Amine sulfotransferase (293 aa).

46–51 contributes to the 3'-phosphoadenylyl sulfate binding site; the sequence is KSGTIW. The active-site Proton acceptor is His-101. 3'-phosphoadenylyl sulfate contacts are provided by residues Arg-123, Ser-131, 220-225, and 252-254; these read ATFQKM and RKG.

This sequence belongs to the sulfotransferase 1 family.

The protein resides in the cytoplasm. It catalyses the reaction a primary amine + 3'-phosphoadenylyl sulfate = a sulfamate + adenosine 3',5'-bisphosphate + 2 H(+). Functionally, sulfotransferase that utilizes 3'-phospho-5'-adenylyl sulfate (PAPS) as sulfonate donor to catalyze the N-sulfonation of amines. The protein is Amine sulfotransferase (Sult3a1) of Mus musculus (Mouse).